The primary structure comprises 571 residues: Proline--tRNA ligase (571 aa).

This sequence belongs to the class-II aminoacyl-tRNA synthetase family. ProS type 1 subfamily. In terms of assembly, homodimer.

Its subcellular location is the cytoplasm. The enzyme catalyses tRNA(Pro) + L-proline + ATP = L-prolyl-tRNA(Pro) + AMP + diphosphate. Functionally, catalyzes the attachment of proline to tRNA(Pro) in a two-step reaction: proline is first activated by ATP to form Pro-AMP and then transferred to the acceptor end of tRNA(Pro). As ProRS can inadvertently accommodate and process non-cognate amino acids such as alanine and cysteine, to avoid such errors it has two additional distinct editing activities against alanine. One activity is designated as 'pretransfer' editing and involves the tRNA(Pro)-independent hydrolysis of activated Ala-AMP. The other activity is designated 'posttransfer' editing and involves deacylation of mischarged Ala-tRNA(Pro). The misacylated Cys-tRNA(Pro) is not edited by ProRS. This Shewanella sp. (strain W3-18-1) protein is Proline--tRNA ligase.